The following is a 344-amino-acid chain: Sulfate/thiosulfate import ATP-binding protein CysA (344 aa).

An ABC transporter domain is found at 9–239; the sequence is IQVSQVSKQF…PATPFVMSFI (231 aa). Position 41-48 (41-48) interacts with ATP; that stretch reads GPSGSGKS.

Belongs to the ABC transporter superfamily. Sulfate/tungstate importer (TC 3.A.1.6) family. As to quaternary structure, the complex is composed of two ATP-binding proteins (CysA), two transmembrane proteins (CysT and CysW) and a solute-binding protein (CysP).

It is found in the cell inner membrane. It carries out the reaction sulfate(out) + ATP + H2O = sulfate(in) + ADP + phosphate + H(+). The catalysed reaction is thiosulfate(out) + ATP + H2O = thiosulfate(in) + ADP + phosphate + H(+). Its function is as follows. Part of the ABC transporter complex CysAWTP involved in sulfate/thiosulfate import. Responsible for energy coupling to the transport system. This Synechococcus elongatus (strain ATCC 33912 / PCC 7942 / FACHB-805) (Anacystis nidulans R2) protein is Sulfate/thiosulfate import ATP-binding protein CysA.